Here is a 46-residue protein sequence, read N- to C-terminus: uncharacterized protein (46 aa).

The tract at residues 1–46 (MEVTPLETGRARSHQKASTAAQPHAADEKMTGSTARRYLSQDHQSV) is disordered.

This is an uncharacterized protein from Treponema pallidum (strain Nichols).